The primary structure comprises 1030 residues: Alpha-L-rhamnosidase (1030 aa).

The segment at P133–P297 is carbohydrate-binding module-67 (CBM67). Residues D179 and N180 each coordinate Ca(2+). Alpha-L-rhamnose is bound by residues D179–N180 and W203. Ca(2+)-binding residues include N228 and P233. Alpha-L-rhamnose contacts are provided by residues D630, R634–E636, D643, and W695. Catalysis depends on E636, which acts as the Proton donor. E895 acts as the Proton acceptor in catalysis. H916 contributes to the alpha-L-rhamnose binding site.

Belongs to the glycosyl hydrolase 78 family.

The enzyme catalyses Hydrolysis of terminal non-reducing alpha-L-rhamnose residues in alpha-L-rhamnosides.. Its function is as follows. Alpha-L-rhamnosidase which is able to degrade p-nitrophenyl-alpha-L-rhamnopyranoside (PNP-Rha) in vitro. Releases L-rhamnose from citrus flavonoids such as naringin, rutin and hesperidin, and the arabinogalactan-protein (AGP) gum arabic. AGPs are a family of proteoglycans that are localized on the cell surfaces of higher plants. Cleaves both the alpha-1,6 and the alpha-1,2-linked rhamnosyl residues. This chain is Alpha-L-rhamnosidase, found in Streptomyces avermitilis (strain ATCC 31267 / DSM 46492 / JCM 5070 / NBRC 14893 / NCIMB 12804 / NRRL 8165 / MA-4680).